The sequence spans 461 residues: NADH-ubiquinone oxidoreductase chain 4 (461 aa).

The next 13 helical transmembrane spans lie at 20 to 42 (PAWL…LTWL), 61 to 81 (PLST…ILAS), 93 to 113 (QRSF…AFGA), 114 to 134 (TEII…LIII), 147 to 167 (GTYF…ALLM), 197 to 217 (WTAC…HLWL), 225 to 245 (PIAG…YGMM), 258 to 278 (LAYP…SICL), 285 to 304 (SLIA…GILT), 309 to 331 (GFTG…FCLA), 351 to 371 (VILP…LALP), 393 to 413 (TLTM…HMFL), and 436 to 456 (LLMT…ELIW).

It belongs to the complex I subunit 4 family.

It localises to the mitochondrion membrane. It catalyses the reaction a ubiquinone + NADH + 5 H(+)(in) = a ubiquinol + NAD(+) + 4 H(+)(out). In terms of biological role, core subunit of the mitochondrial membrane respiratory chain NADH dehydrogenase (Complex I) that is believed to belong to the minimal assembly required for catalysis. Complex I functions in the transfer of electrons from NADH to the respiratory chain. The immediate electron acceptor for the enzyme is believed to be ubiquinone. The polypeptide is NADH-ubiquinone oxidoreductase chain 4 (MT-ND4) (Latimeria chalumnae (Coelacanth)).